The chain runs to 406 residues: Probable delta-aminolevulinic acid dehydratase 2, chloroplastic (406 aa).

The transit peptide at 1–34 (MTSSMFRSPCKIPSVKGFEQKSYVGLKAASYNVR) directs the protein to the chloroplast. The active-site Schiff-base intermediate with substrate is the lysine 275. Residues arginine 285 and lysine 291 each contribute to the 5-aminolevulinate site. Mg(2+) is bound at residue glutamate 307. Lysine 322 acts as the Schiff-base intermediate with substrate in catalysis. The 5-aminolevulinate site is built by serine 348 and tyrosine 387.

The protein belongs to the ALAD family. Homooctamer. It depends on Mg(2+) as a cofactor.

Its subcellular location is the plastid. The protein localises to the chloroplast. It catalyses the reaction 2 5-aminolevulinate = porphobilinogen + 2 H2O + H(+). The protein operates within porphyrin-containing compound metabolism; protoporphyrin-IX biosynthesis; coproporphyrinogen-III from 5-aminolevulinate: step 1/4. It functions in the pathway porphyrin-containing compound metabolism; chlorophyll biosynthesis. Catalyzes an early step in the biosynthesis of tetrapyrroles. Binds two molecules of 5-aminolevulinate per subunit, each at a distinct site, and catalyzes their condensation to form porphobilinogen. This is Probable delta-aminolevulinic acid dehydratase 2, chloroplastic (HEMB2) from Arabidopsis thaliana (Mouse-ear cress).